A 173-amino-acid polypeptide reads, in one-letter code: Adenine phosphoribosyltransferase (173 aa).

The protein belongs to the purine/pyrimidine phosphoribosyltransferase family. Homodimer.

The protein resides in the cytoplasm. The catalysed reaction is AMP + diphosphate = 5-phospho-alpha-D-ribose 1-diphosphate + adenine. It functions in the pathway purine metabolism; AMP biosynthesis via salvage pathway; AMP from adenine: step 1/1. Functionally, catalyzes a salvage reaction resulting in the formation of AMP, that is energically less costly than de novo synthesis. The chain is Adenine phosphoribosyltransferase from Methanococcus vannielii (strain ATCC 35089 / DSM 1224 / JCM 13029 / OCM 148 / SB).